Reading from the N-terminus, the 758-residue chain is RNA-directed RNA polymerase catalytic subunit (758 aa).

Residues 53 to 82 (GRWTTNTETGAPQLNPIDGPLPEDNEPSGY) are disordered. The segment covering 55 to 64 (WTTNTETGAP) has biased composition (polar residues). 2 consecutive short sequence motifs (nuclear localization signal) follow at residues 187–195 (RKRRVRDNM) and 203–216 (RTIG…TKKS). The segment at 249–256 (RGFVHFVE) is promoter-binding site. One can recognise a RdRp catalytic domain in the interval 286–483 (VRKMMTNSQD…GINMSKKKSY (198 aa)).

The protein belongs to the influenza viruses polymerase PB1 family. Influenza RNA polymerase is composed of three subunits: PB1, PB2 and PA. Interacts (via N-terminus) with PA (via C-terminus). Interacts (via C-terminus) with PB2 (via N-terminus); this interaction is essential for transcription initiation. Phosphorylated by host PRKCA.

It is found in the host nucleus. Its subcellular location is the host cytoplasm. The catalysed reaction is RNA(n) + a ribonucleoside 5'-triphosphate = RNA(n+1) + diphosphate. In terms of biological role, RNA-dependent RNA polymerase which is responsible for replication and transcription of virus RNA segments. The transcription of viral mRNAs occurs by a unique mechanism called cap-snatching. 5' methylated caps of cellular mRNAs are cleaved after 10-13 nucleotides by PA. In turn, these short capped RNAs are used as primers by PB1 for transcription of viral mRNAs. During virus replication, PB1 initiates RNA synthesis and copy vRNA into complementary RNA (cRNA) which in turn serves as a template for the production of more vRNAs. In Aves (Cat), this protein is RNA-directed RNA polymerase catalytic subunit.